Here is a 707-residue protein sequence, read N- to C-terminus: E3 ubiquitin-protein ligase Praja-2 (707 aa).

Positions 1 to 10 (MSQYTEKEPS) are enriched in basic and acidic residues. Disordered regions lie at residues 1–23 (MSQY…AWPR), 75–120 (NTAG…PSVA), and 242–290 (AGDA…CVPG). The residue at position 2 (serine 2) is an N-acetylserine. Residues 109–119 (LNQSTESNPSV) show a composition bias toward polar residues. Over residues 246-276 (EAVHQDGQEFQRSSEDGIVRKRRQDDTDQGR) the composition is skewed to basic and acidic residues. Serine 306 and serine 320 each carry phosphoserine. Serine 339 carries the post-translational modification Phosphoserine; by PKA. Disordered regions lie at residues 380-403 (VTPR…GRQE) and 424-493 (EDSS…QTSL). Basic and acidic residues predominate over residues 381–391 (TPREAERHRAT). A Phosphoserine modification is found at serine 430. Residues 465 to 481 (NEPELQSDSSGPEEENQ) are compositionally biased toward acidic residues. A compositionally biased stretch (polar residues) spans 482–491 (ELSLQEGEQT). Residues 530–707 (DGNNNLEDDS…PANDNAEEAP (178 aa)) are interaction with PRKAR1A, PRKAR2A and PRKAR2B. A mediates interaction with TBC1D31 region spans residues 549 to 569 (WSLFDGFADGLGVAEAISYVD). The segment at 633–674 (CPICCSEYIKDDIATELPCHHFFHKPCVSIWLQKSGTCPVCR) adopts an RING-type; atypical zinc-finger fold. The tract at residues 686–707 (AAASSEPDLDASPANDNAEEAP) is disordered.

Binds ubiquitin-conjugating enzymes (E2s). In vitro, interacts with the ubiquitin-conjugating enzyme, UBE2D2. The phosphorylated form interacts with PRKAR1A, PRKAR2A and PRKAR2B. Binds the catalytic subunits of cAMP-dependent protein kinase. Interacts with MFHAS1. Interacts with TBC1D31; the interaction is direct and recruits PJA2 to centrosomes. Highly expressed in the brain, in nerve cells but not in glial cells. Abundantly expressed in pyramidal neurons and in the CA3 region of apical dendrites. Colocalizes with PRKAR2B in dentate granule cells and at postsynaptic sites of primary hippocampal neurons.

It localises to the cytoplasm. It is found in the cell membrane. Its subcellular location is the endoplasmic reticulum membrane. The protein localises to the golgi apparatus membrane. The protein resides in the synapse. It localises to the postsynaptic density. It is found in the cytoskeleton. Its subcellular location is the microtubule organizing center. The protein localises to the centrosome. It carries out the reaction S-ubiquitinyl-[E2 ubiquitin-conjugating enzyme]-L-cysteine + [acceptor protein]-L-lysine = [E2 ubiquitin-conjugating enzyme]-L-cysteine + N(6)-ubiquitinyl-[acceptor protein]-L-lysine.. It functions in the pathway protein modification; protein ubiquitination. In terms of biological role, has E2-dependent E3 ubiquitin-protein ligase activity. Responsible for ubiquitination of cAMP-dependent protein kinase type I and type II-alpha/beta regulatory subunits and for targeting them for proteasomal degradation. Essential for PKA-mediated long-term memory processes. Through the ubiquitination of MFHAS1, positively regulates the TLR2 signaling pathway that leads to the activation of the downstream p38 and JNK MAP kinases and promotes the polarization of macrophages toward the pro-inflammatory M1 phenotype. Plays a role in ciliogenesis by ubiquitinating OFD1. In Rattus norvegicus (Rat), this protein is E3 ubiquitin-protein ligase Praja-2 (Pja2).